The primary structure comprises 157 residues: Cytochrome c-type biogenesis protein CcmE (157 aa).

Residues 1-7 (MTPRQRR) lie on the Cytoplasmic side of the membrane. Residues 8–28 (LGLLAAALACCGVAAALVLNA) form a helical; Signal-anchor for type II membrane protein membrane-spanning segment. Over 29 to 157 (FRANLVFFFS…GAMAAQELRR (129 aa)) the chain is Periplasmic. Heme contacts are provided by histidine 123 and tyrosine 127.

Belongs to the CcmE/CycJ family.

It is found in the cell inner membrane. Functionally, heme chaperone required for the biogenesis of c-type cytochromes. Transiently binds heme delivered by CcmC and transfers the heme to apo-cytochromes in a process facilitated by CcmF and CcmH. In Cupriavidus taiwanensis (strain DSM 17343 / BCRC 17206 / CCUG 44338 / CIP 107171 / LMG 19424 / R1) (Ralstonia taiwanensis (strain LMG 19424)), this protein is Cytochrome c-type biogenesis protein CcmE.